The following is a 63-amino-acid chain: Bowman-Birk type proteinase inhibitor B-II (63 aa).

Cystine bridges form between C5/C62, C6/C23, C9/C57, C11/C21, C30/C37, C34/C49, and C39/C47.

Belongs to the Bowman-Birk serine protease inhibitor family.

The sequence is that of Bowman-Birk type proteinase inhibitor B-II from Arachis hypogaea (Peanut).